The primary structure comprises 70 residues: uncharacterized protein (70 aa).

A helical membrane pass occupies residues 15–37 (IFAFLLFRLCKFCCVFCCALCNV).

Its subcellular location is the membrane. This is an uncharacterized protein from Dictyostelium discoideum (Social amoeba).